The sequence spans 455 residues: UDP-N-acetylmuramoylalanine--D-glutamate ligase (455 aa).

An ATP-binding site is contributed by 117–123; that stretch reads GSAGKTT.

It belongs to the MurCDEF family.

It is found in the cytoplasm. The catalysed reaction is UDP-N-acetyl-alpha-D-muramoyl-L-alanine + D-glutamate + ATP = UDP-N-acetyl-alpha-D-muramoyl-L-alanyl-D-glutamate + ADP + phosphate + H(+). Its pathway is cell wall biogenesis; peptidoglycan biosynthesis. In terms of biological role, cell wall formation. Catalyzes the addition of glutamate to the nucleotide precursor UDP-N-acetylmuramoyl-L-alanine (UMA). The sequence is that of UDP-N-acetylmuramoylalanine--D-glutamate ligase from Symbiobacterium thermophilum (strain DSM 24528 / JCM 14929 / IAM 14863 / T).